Reading from the N-terminus, the 157-residue chain is Cyclic pyranopterin monophosphate synthase (157 aa).

Substrate is bound by residues 74–76 (MCH) and 112–113 (ME). The active site involves Asp-127.

The protein belongs to the MoaC family. In terms of assembly, homohexamer; trimer of dimers.

It carries out the reaction (8S)-3',8-cyclo-7,8-dihydroguanosine 5'-triphosphate = cyclic pyranopterin phosphate + diphosphate. It functions in the pathway cofactor biosynthesis; molybdopterin biosynthesis. Catalyzes the conversion of (8S)-3',8-cyclo-7,8-dihydroguanosine 5'-triphosphate to cyclic pyranopterin monophosphate (cPMP). The sequence is that of Cyclic pyranopterin monophosphate synthase from Campylobacter jejuni subsp. doylei (strain ATCC BAA-1458 / RM4099 / 269.97).